The chain runs to 454 residues: 5-hydroxytryptamine receptor 3D (454 aa).

The N-terminal stretch at 1-24 (MQKHSPGPPALALLSQSLLTTGNG) is a signal peptide. The Extracellular portion of the chain corresponds to 25–232 (DTLIINCPGF…IRRRCRPSPY (208 aa)). The N-linked (GlcNAc...) asparagine glycan is linked to Asn66. A helical membrane pass occupies residues 233 to 253 (VVNFLVPSGILIAIDALSFYL). Over 254-264 (PLESGNCAPFK) the chain is Cytoplasmic. Residues 265-285 (MTVLLGYSVFLLMMNDLLPAT) traverse the membrane as a helical segment. At 286–306 (STSSHASLVAPLALMQTPLPA) the chain is on the extracellular side. The chain crosses the membrane as a helical span at residues 307–327 (GVYFALCLSLMVGSLLETIFI). Topologically, residues 328 to 431 (THLLHVATTQ…WVQFSHAMDA (104 aa)) are cytoplasmic. A disordered region spans residues 363–410 (PQKGNKGPGLTPTHLPGVKEPEVSAGQMPGPGEAELTGGSEWTRAQRE). The segment at 399-430 (TGGSEWTRAQREHEAQKQHSVELWVQFSHAMD) is HA-stretch; determines single-channel conductance in 5-HT3 receptors. A helical membrane pass occupies residues 432-452 (LLFRLYLLFMASSIITVICLW). Residues 453–454 (NT) lie on the Extracellular side of the membrane.

The protein belongs to the ligand-gated ion channel (TC 1.A.9) family. 5-hydroxytryptamine receptor (TC 1.A.9.2) subfamily. HTR3D sub-subfamily. In terms of assembly, forms homopentameric as well as heteropentameric serotonin-activated cation-selective channel complexes with HTR3A. The homomeric complex is not functional. Heteropentameric complexes display properties which resemble that of neuronal serotonin-activated channels in vivo. Expressed in liver, as well as fetal and adult colon and kidney.

It is found in the postsynaptic cell membrane. It localises to the cell membrane. The enzyme catalyses Na(+)(in) = Na(+)(out). It carries out the reaction K(+)(in) = K(+)(out). The catalysed reaction is Ca(2+)(in) = Ca(2+)(out). Functionally, forms serotonin (5-hydroxytryptamine/5-HT3)-activated cation-selective channel complexes, which when activated cause fast, depolarizing responses in neurons. The sequence is that of 5-hydroxytryptamine receptor 3D from Homo sapiens (Human).